We begin with the raw amino-acid sequence, 241 residues long: UDP-2,3-diacylglucosamine hydrolase (241 aa).

Mn(2+)-binding residues include aspartate 8, histidine 10, aspartate 41, asparagine 78, and histidine 113. A substrate-binding site is contributed by 78-79 (NR). Aspartate 121, serine 159, asparagine 163, lysine 166, and histidine 194 together coordinate substrate. Mn(2+) contacts are provided by histidine 194 and histidine 196.

The protein belongs to the LpxH family. Mn(2+) serves as cofactor.

The protein resides in the cell inner membrane. It carries out the reaction UDP-2-N,3-O-bis[(3R)-3-hydroxytetradecanoyl]-alpha-D-glucosamine + H2O = 2-N,3-O-bis[(3R)-3-hydroxytetradecanoyl]-alpha-D-glucosaminyl 1-phosphate + UMP + 2 H(+). It functions in the pathway glycolipid biosynthesis; lipid IV(A) biosynthesis; lipid IV(A) from (3R)-3-hydroxytetradecanoyl-[acyl-carrier-protein] and UDP-N-acetyl-alpha-D-glucosamine: step 4/6. Its function is as follows. Hydrolyzes the pyrophosphate bond of UDP-2,3-diacylglucosamine to yield 2,3-diacylglucosamine 1-phosphate (lipid X) and UMP by catalyzing the attack of water at the alpha-P atom. Involved in the biosynthesis of lipid A, a phosphorylated glycolipid that anchors the lipopolysaccharide to the outer membrane of the cell. This is UDP-2,3-diacylglucosamine hydrolase from Shewanella putrefaciens (strain CN-32 / ATCC BAA-453).